The chain runs to 624 residues: (-)-beta-phellandrene synthase 1, chloroplastic (624 aa).

The transit peptide at 1 to 48 directs the protein to the chloroplast; that stretch reads MAIVSSVPLASKSCLHKSLISSIHKLKPFCRTIPTLGMSRPGKYVMPS. Positions 375, 379, and 527 each coordinate Mg(2+). The short motif at 375-379 is the DDXXD motif element; it reads DDMYD.

It belongs to the terpene synthase family. Tpsd subfamily. Mg(2+) is required as a cofactor. Mn(2+) serves as cofactor.

Its subcellular location is the plastid. It localises to the chloroplast. It carries out the reaction (2E)-geranyl diphosphate = (-)-beta-phellandrene + diphosphate. The protein operates within terpene metabolism; oleoresin biosynthesis. In terms of biological role, terpene synthase (TPS) involved in the biosynthesis of monoterpene natural products included in conifer oleoresin secretions and volatile emissions; these compounds contribute to biotic and abiotic stress defense against herbivores and pathogens. Catalyzes the conversion of (2E)-geranyl diphosphate (GPP) to (-)-beta-phellandrene. The sequence is that of (-)-beta-phellandrene synthase 1, chloroplastic from Picea sitchensis (Sitka spruce).